A 37-amino-acid polypeptide reads, in one-letter code: U12-myrmicitoxin-Mri1a (37 aa).

The signal sequence occupies residues 1–23 (MKTIELITIFAMITTLMVTVVAG). A propeptide spanning residues 24 to 25 (DP) is cleaved from the precursor. Val35 bears the Valine amide mark.

In terms of tissue distribution, expressed by the venom gland.

The protein resides in the secreted. Functionally, toxin that induces mild paralysis, and reduces survival and reproduction when injected into aphids (A.pisum). May affect various processes in the aphid, including wound healing and hemolymph coagulation. It does not increase the sensitivity of the aphids to the chemical insecticides imidacloprid, methomyl and Spirotetramat. Has no insecticidal activity when injected into blowfly (L.caesar). Does not display any antibacterial or antifungal activity. This chain is U12-myrmicitoxin-Mri1a, found in Manica rubida (European giant red ant).